The following is a 372-amino-acid chain: Cytoplasmic tRNA 2-thiolation protein 1 (372 aa).

Residues 335-372 (GKKEDGGCGSGGGGCGCAGAADETENEETRKRLKDLQF) form a disordered region. The segment covering 341 to 351 (GCGSGGGGCGC) has biased composition (gly residues). The segment covering 361 to 372 (EETRKRLKDLQF) has biased composition (basic and acidic residues).

The protein belongs to the TtcA family. CTU1/NCS6/ATPBD3 subfamily.

It localises to the cytoplasm. Its pathway is tRNA modification; 5-methoxycarbonylmethyl-2-thiouridine-tRNA biosynthesis. Plays a central role in 2-thiolation of mcm(5)S(2)U at tRNA wobble positions of tRNA(Lys), tRNA(Glu) and tRNA(Gln). Directly binds tRNAs and probably acts by catalyzing adenylation of tRNAs, an intermediate required for 2-thiolation. It is unclear whether it acts as a sulfurtransferase that transfers sulfur from thiocarboxylated URM1 onto the uridine of tRNAs at wobble position. This is Cytoplasmic tRNA 2-thiolation protein 1 from Caenorhabditis briggsae.